Here is a 257-residue protein sequence, read N- to C-terminus: Septu protein PtuB (257 aa).

Positions 49–96 constitute an HNH domain; the sequence is CVYCECRLDEESKYMEVEHFLPKDTYPNLVVNWRNLLPSCKRCNGKKG.

Functionally, component of antiviral defense system Septu type I, composed of PtuA and PtuB. Expression of Septu type I in B.subtilis (strain BEST7003) confers resistance to phages SBSphiC and SBSphiJ. May be a nuclease. The polypeptide is Septu protein PtuB (Bacillus thuringiensis).